The primary structure comprises 379 residues: Probable leucine aminopeptidase ARB_01443 (379 aa).

Residues 1 to 18 (MKIATLAVVSAFAATAIA) form the signal peptide. Zn(2+)-binding residues include His-182 and Asp-201. Asn-202 and Asn-226 each carry an N-linked (GlcNAc...) asparagine glycan. Zn(2+) is bound by residues Glu-240 and Asp-267. A disulfide bridge links Cys-312 with Cys-316. Residue His-345 coordinates Zn(2+).

The protein belongs to the peptidase M28 family. M28E subfamily. Monomer. The cofactor is Zn(2+).

It is found in the secreted. Functionally, probable extracellular aminopeptidase which contributes to pathogenicity. The protein is Probable leucine aminopeptidase ARB_01443 of Arthroderma benhamiae (strain ATCC MYA-4681 / CBS 112371) (Trichophyton mentagrophytes).